The following is a 155-amino-acid chain: Chromosomal passenger complex protein bir-1 (155 aa).

One copy of the BIR repeat lies at 20–87; sequence RLMTFKNFEY…KRDEPCEFVR (68 aa). Cys-57, Cys-60, His-76, and Cys-83 together coordinate Zn(2+).

It belongs to the IAP family. Component of the CPC complex which consists of icp-1; csc-1; bir-1 and air-2. Within the complex, interacts with csc-1, icp-1 and air-2. Interacts with csc-1 in a zinc-dependent-manner; the interaction is direct. As to expression, expressed in oocytes and sperm.

Its subcellular location is the chromosome. The protein resides in the cytoplasm. It localises to the cytoskeleton. The protein localises to the spindle. It is found in the midbody. In terms of biological role, component of the chromosomal passenger complex (CPC), a complex that acts as a key regulator of chromosome segregation and cytokinesis. The CPC complex has essential functions at the centromere in ensuring correct chromosome condensation, alignment and segregation. In the complex, required to direct the Aurora B/air-2 kinase to chromosomes. Also functions in spindle midzone formation and in the formation of polar bodies during oogenesis. Required for the localization of the kinetochore component hcp-1 to chromosomes. Involved in the positive regulation of transcription. Involved in the transcriptional regulation of collagen genes. In Caenorhabditis elegans, this protein is Chromosomal passenger complex protein bir-1.